Consider the following 233-residue polypeptide: Large ribosomal subunit protein mL67 (233 aa).

Residues 214 to 233 are disordered; sequence RQQAQQSEQQSQSELESQTA. Positions 215–233 are enriched in low complexity; sequence QQAQQSEQQSQSELESQTA.

Belongs to the mitochondrion-specific ribosomal protein mL67 family.

It localises to the nucleus. Its subcellular location is the mitochondrion. In terms of biological role, transcription factor involved in regulation of RNA polymerase II-dependent transcription. Also involved in regulation of mitochondrial DNA recombination, maintenance and repair, and generation of homoplasmic cells. In Debaryomyces hansenii (strain ATCC 36239 / CBS 767 / BCRC 21394 / JCM 1990 / NBRC 0083 / IGC 2968) (Yeast), this protein is Large ribosomal subunit protein mL67 (MHR1).